We begin with the raw amino-acid sequence, 101 residues long: Small ribosomal subunit protein bS18c (101 aa).

The protein belongs to the bacterial ribosomal protein bS18 family. As to quaternary structure, part of the 30S ribosomal subunit.

Its subcellular location is the plastid. It is found in the chloroplast. This Arabidopsis thaliana (Mouse-ear cress) protein is Small ribosomal subunit protein bS18c (rps18).